An 869-amino-acid polypeptide reads, in one-letter code: Eukaryotic translation initiation factor 3 subunit C (869 aa).

Disordered regions lie at residues 1–92 and 182–242; these read MSRF…KSAK and IKKA…VGKG. The segment covering 14–55 has biased composition (acidic residues); that stretch reads SSDEEEDLYSDDEEVQEQPEEESSEDDSEEDDDDDDDSDSSS. A compositionally biased stretch (basic and acidic residues) spans 185 to 203; that stretch reads ASKEHQKDIDSFRADKDAY. The region spanning 607–781 is the PCI domain; it reads FHMHINLELL…SSIIFRKGVE (175 aa). The tract at residues 803–869 is disordered; it reads NERTLETRTQ…ALGAAVGSRA (67 aa). Positions 823–843 are enriched in gly residues; the sequence is GRGGRGGNRGGRGGGRGGRGG.

The protein belongs to the eIF-3 subunit C family. As to quaternary structure, component of the eukaryotic translation initiation factor 3 (eIF-3) complex.

The protein resides in the cytoplasm. Its function is as follows. Component of the eukaryotic translation initiation factor 3 (eIF-3) complex, which is involved in protein synthesis of a specialized repertoire of mRNAs and, together with other initiation factors, stimulates binding of mRNA and methionyl-tRNAi to the 40S ribosome. The eIF-3 complex specifically targets and initiates translation of a subset of mRNAs involved in cell proliferation. The chain is Eukaryotic translation initiation factor 3 subunit C (nip1) from Botryotinia fuckeliana (strain B05.10) (Noble rot fungus).